The chain runs to 434 residues: GPI-anchor transamidase component PIGU (434 aa).

The Cytoplasmic portion of the chain corresponds to 1 to 3 (MAA). A helical membrane pass occupies residues 4 to 22 (PLALVLVVAVTVRAALFRS). The Lumenal portion of the chain corresponds to 23-78 (SLAEFISERVEVVSPLSSWKRVVEGLALLDLGVSPYSGAVFHETPLIIYLFHFLID). The helical transmembrane segment at 79–99 (YAELVFMITDALTAIALYFAI) threads the bilayer. Residues 100-136 (QDFNKVVFKKQKLLLELDQYAPDVAELIRTPMEMRYI) are Cytoplasmic-facing. 4 consecutive transmembrane segments (helical) span residues 137–157 (PLKV…VAKS), 158–177 (TCAI…IKGS), 178–193 (VFLS…YQSL), and 194–204 (YPVTLFAPGLL). The Cytoplasmic portion of the chain corresponds to 205–221 (YLLQRQYIPVKVKSKAF). Residue Lys-215 coordinates a cardiolipin. The helical transmembrane segment at 222-243 (WIFSWEYAMMYTGSLVVIVCLS) threads the bilayer. Topologically, residues 244–285 (FFLLSSWDFIPAVYGFILSVPDLTPNIGLFWYFFAEMFEHFS) are lumenal. The chain crosses the membrane as a helical span at residues 286–305 (LFFVCVFQINVFFYTVPLAI). Over 306–310 (KLKEH) the chain is Cytoplasmic. Lys-308 provides a ligand contact to a cardiolipin. The next 2 membrane-spanning stretches (helical) occupy residues 311–330 (PIFF…SYPT) and 331–344 (VGDV…FPVW). The Cytoplasmic segment spans residues 345 to 353 (NHLYRFLRN). A helical membrane pass occupies residues 354–371 (IFVLTCIIIVCSLLFPVL). Residues 372 to 383 (WHLWIYAGSANS) lie on the Lumenal side of the membrane. A 2-acyl-6-[6-phosphoethanolamine-alpha-D-mannosyl-(1-&gt;2)-6-phosphoethanolamine-alpha-D-mannosyl-(1-&gt;6)-2-phosphoethanolamine-alpha-D-mannosyl-(1-&gt;4)-alpha-D-glucosaminyl]-1-(1-radyl,2-acyl-sn-glycero-3-phospho)-1D-myo-inositol contacts are provided by Asn-382 and Asn-384. A helical transmembrane segment spans residues 384 to 405 (NFFYAITLTFNVGQILLISDYF). Over 406 to 434 (YAFLRREYYLTHGLYLTAKDGTEAMLVLK) the chain is Cytoplasmic.

This sequence belongs to the PIGU family. In terms of assembly, heteropentamer. Part of the GPI-anchor transamidase complex, consisting of PIGK, PIGT, PIGS, PIGU and GAA1.

Its subcellular location is the endoplasmic reticulum membrane. Its pathway is glycolipid biosynthesis; glycosylphosphatidylinositol-anchor biosynthesis. Functionally, component of the glycosylphosphatidylinositol-anchor (GPI-anchor) transamidase (GPI-T) complex that catalyzes the formation of the linkage between a proprotein and a GPI-anchor and participates in GPI anchored protein biosynthesis. Binds the lipid portion of GPI-anchor. May act as an organizer in the transmembrane layer to recruit other subunits, and thus is essential for assembly of the complex. In Mus musculus (Mouse), this protein is GPI-anchor transamidase component PIGU.